Consider the following 150-residue polypeptide: Head completion nuclease (150 aa).

Residues Glu29, Asp68, and Lys84 contribute to the active site.

The protein belongs to the Caudovirales head completion nuclease family.

Its function is as follows. During phage morphogenesis, plays an essential role in the head-tail joining step. The associated nuclease activity is essential for morphogenesis, possibly by cleaving packaged DNA to enable the joining of heads to tails. Displays both exo- and endonuclease activity. This is Head completion nuclease (50) from Enterobacteria phage T4 (Bacteriophage T4).